The chain runs to 251 residues: Aspartate/glutamate leucyltransferase (251 aa).

The protein belongs to the R-transferase family. Bpt subfamily.

It is found in the cytoplasm. It catalyses the reaction N-terminal L-glutamyl-[protein] + L-leucyl-tRNA(Leu) = N-terminal L-leucyl-L-glutamyl-[protein] + tRNA(Leu) + H(+). The enzyme catalyses N-terminal L-aspartyl-[protein] + L-leucyl-tRNA(Leu) = N-terminal L-leucyl-L-aspartyl-[protein] + tRNA(Leu) + H(+). In terms of biological role, functions in the N-end rule pathway of protein degradation where it conjugates Leu from its aminoacyl-tRNA to the N-termini of proteins containing an N-terminal aspartate or glutamate. This Stenotrophomonas maltophilia (strain R551-3) protein is Aspartate/glutamate leucyltransferase.